The chain runs to 154 residues: dCTP deaminase (154 aa).

Residues Arg79–Arg84, Asp95, Gln124, and Tyr138 contribute to the dCTP site.

This sequence belongs to the dCTP deaminase family. Homotrimer.

It catalyses the reaction dCTP + H2O + H(+) = dUTP + NH4(+). The protein operates within pyrimidine metabolism; dUMP biosynthesis; dUMP from dCTP (dUTP route): step 1/2. Catalyzes the deamination of dCTP to dUTP. The sequence is that of dCTP deaminase from Pyrococcus abyssi (strain GE5 / Orsay).